We begin with the raw amino-acid sequence, 379 residues long: Chaperone protein DnaJ (379 aa).

Residues 5–70 enclose the J domain; it reads DYYELLEVSR…QKRAAYDQFG (66 aa). A CR-type zinc finger spans residues 135–213; sequence GKEVEITVPR…CHGQGRVRES (79 aa). Zn(2+) is bound by residues Cys-148, Cys-151, Cys-165, Cys-168, Cys-187, Cys-190, Cys-201, and Cys-204. CXXCXGXG motif repeat units follow at residues 148 to 155, 165 to 172, 187 to 194, and 201 to 208; these read CTVCEGSG, CETCQGMG, CPTCHGEG, and CASCHGQG.

Belongs to the DnaJ family. In terms of assembly, homodimer. Requires Zn(2+) as cofactor.

The protein localises to the cytoplasm. Functionally, participates actively in the response to hyperosmotic and heat shock by preventing the aggregation of stress-denatured proteins and by disaggregating proteins, also in an autonomous, DnaK-independent fashion. Unfolded proteins bind initially to DnaJ; upon interaction with the DnaJ-bound protein, DnaK hydrolyzes its bound ATP, resulting in the formation of a stable complex. GrpE releases ADP from DnaK; ATP binding to DnaK triggers the release of the substrate protein, thus completing the reaction cycle. Several rounds of ATP-dependent interactions between DnaJ, DnaK and GrpE are required for fully efficient folding. Also involved, together with DnaK and GrpE, in the DNA replication of plasmids through activation of initiation proteins. The sequence is that of Chaperone protein DnaJ from Legionella pneumophila (strain Corby).